The primary structure comprises 2671 residues: Stalled ribosome sensor GCN1 (2671 aa).

Alanine 2 carries the post-translational modification N-acetylalanine. 10 HEAT repeats span residues 140-178 (NKLV…ENPG), 257-293 (EFKD…LDLS), 294-331 (QYAM…QCSD), 385-423 (IVAE…EVPK), 425-459 (LTEW…GDTL), 460-503 (LQAL…SVAD), 560-597 (NKVQ…SLGG), 599-636 (KLAH…AGKA), 697-732 (DPEA…SLSV), and 733-770 (LSPD…QTPA). Serine 729 is modified (phosphoserine). Phosphoserine is present on serine 786. The stretch at 804 to 863 (QIIELELKEEIKKKKGIKEEVQLTSKQKEMLQAQLDREAQVRRRLQELDGELEAALGLLD) forms a coiled coil. HEAT repeat units lie at residues 879–925 (VLVD…HVTL), 979–1016 (SLVF…QAQL), 1035–1072 (LPRV…SSSG), 1078–1115 (FAEQ…VLPA), 1155–1192 (DLQP…RYQR), 1210–1250 (YRPP…YLDS), 1251–1289 (SQVK…THGK), 1290–1332 (ENVN…HLDK), 1335–1372 (PKVK…AIKE), 1374–1410 (AGGM…GLGI), 1413–1451 (LKQQ…MLGK), 1455–1492 (PYVV…NLSA), 1493–1530 (HGVK…CAPK), 1534–1571 (SCLP…VIRN), 1573–1609 (EILA…HFID), 1611–1648 (PSLA…LTDQ), 1653–1690 (PYLP…GMGE), 1692–1729 (CFED…GLGV), 1731–1769 (KLEK…TFGD), 1773–1810 (PYVG…MYAE), 1812–1848 (AIAL…HISG), 1921–1958 (EILP…KLGE), 1959–1996 (KILP…STSR), 2001–2038 (YFSE…TIGH), 2039–2076 (QALE…SRVV), 2078–2106 (PYLV…DALT), 2107–2146 (RHLG…VEDD), 2147–2184 (TGHR…RSKA), 2188–2225 (SHLR…KLDA), 2259–2296 (KGVT…LTSA), 2301–2338 (PSVV…AKVG), 2339–2380 (IALK…IHIK), 2382–2417 (DPLF…GAGA), 2422–2459 (VIRK…FLTE), 2546–2583 (QLPA…DPLP), and 2588–2625 (QAIK…MRQG). An RWDBD region region spans residues 2260 to 2408 (GVTSILPVLR…GVRDTMLQAL (149 aa)). Serine 2276 is subject to Phosphoserine. The stretch at 2627 to 2661 (EVFQSLSKILDVASLEVLNEVNRRSLKKLASQADS) is one HEAT 47; degenerate repeat.

The protein belongs to the GCN1 family. Interacts with EIF2AK4/GCN2; this interaction stimulates the EIF2AK4/GCN2 kinase activity and is impaired by IMPACT upon a variety of stress conditions, such as amino acid depletion, UV-C irradiation, proteasome inhibitor treatment and glucose deprivation. Interacts with IMPACT; this prevents the interaction of GCN1 with EIF2AK4/GCN2 and inhibits EIF2AK4/GCN2 kinase activity. Interacts with RNF14; interaction takes place following ribosome stalling and promotes recruitment of RNF14. In terms of tissue distribution, ubiquitously expressed. Expressed in skeletal muscules, ovary and testis.

The protein localises to the cytoplasm. In terms of biological role, ribosome collision sensor that plays a key role in the RNF14-RNF25 translation quality control pathway, a pathway that takes place when a ribosome has stalled during translation, and which promotes ubiquitination and degradation of translation factors on stalled ribosomes. Directly binds to the ribosome and acts as a sentinel for colliding ribosomes: activated following ribosome stalling and promotes recruitment of RNF14, which directly ubiquitinates EEF1A1/eEF1A, leading to its degradation. In addition to EEF1A1/eEF1A, the RNF14-RNF25 translation quality control pathway mediates degradation of ETF1/eRF1 and ubiquitination of ribosomal protein. GCN1 also acts as a positive activator of the integrated stress response (ISR) by mediating activation of EIF2AK4/GCN2 in response to amino acid starvation. Interaction with EIF2AK4/GCN2 on translating ribosomes stimulates EIF2AK4/GCN2 kinase activity, leading to phosphorylation of eukaryotic translation initiation factor 2 (eIF-2-alpha/EIF2S1). EIF2S1/eIF-2-alpha phosphorylation converts EIF2S1/eIF-2-alpha into a global protein synthesis inhibitor, leading to a global attenuation of cap-dependent translation, and thus to a reduced overall utilization of amino acids, while concomitantly initiating the preferential translation of ISR-specific mRNAs, such as the transcriptional activator ATF4, and hence allowing ATF4-mediated reprogramming of amino acid biosynthetic gene expression to alleviate nutrient depletion. This is Stalled ribosome sensor GCN1 from Homo sapiens (Human).